Consider the following 238-residue polypeptide: Cysteine-rich venom protein pseudechetoxin-like (238 aa).

Positions 1–19 (MIAFIVLLSLAAVLQQSSG) are cleaved as a signal peptide. The propeptide occupies 20–28 (TVDFASESS). An SCP domain is found at 38–164 (VDKHNALRRS…STKYLYVCQY (127 aa)). 8 disulfide bridges follow: Cys-75/Cys-153, Cys-92/Cys-165, Cys-148/Cys-162, Cys-184/Cys-191, Cys-187/Cys-196, Cys-200/Cys-233, Cys-209/Cys-227, and Cys-218/Cys-231. The 34-residue stretch at 200 to 233 (CKYEDDFSNCKALAKNSKCQTEWIKSKCPAACFC) folds into the ShKT domain.

It belongs to the CRISP family. As to expression, expressed by the venom gland.

Its subcellular location is the secreted. Its function is as follows. Blocks olfactory (CNGA2) and retinal (CNGA1) CNG channel currents. Does not affect neither depolarization- nor caffeine-induced contraction of smooth muscle. The protein is Cysteine-rich venom protein pseudechetoxin-like of Notechis scutatus scutatus (Mainland tiger snake).